The following is a 241-amino-acid chain: 1-(5-phosphoribosyl)-5-[(5-phosphoribosylamino)methylideneamino] imidazole-4-carboxamide isomerase (241 aa).

The active-site Proton acceptor is D8. The active-site Proton donor is D127.

It belongs to the HisA/HisF family.

Its subcellular location is the cytoplasm. It catalyses the reaction 1-(5-phospho-beta-D-ribosyl)-5-[(5-phospho-beta-D-ribosylamino)methylideneamino]imidazole-4-carboxamide = 5-[(5-phospho-1-deoxy-D-ribulos-1-ylimino)methylamino]-1-(5-phospho-beta-D-ribosyl)imidazole-4-carboxamide. The protein operates within amino-acid biosynthesis; L-histidine biosynthesis; L-histidine from 5-phospho-alpha-D-ribose 1-diphosphate: step 4/9. The sequence is that of 1-(5-phosphoribosyl)-5-[(5-phosphoribosylamino)methylideneamino] imidazole-4-carboxamide isomerase from Thermotoga petrophila (strain ATCC BAA-488 / DSM 13995 / JCM 10881 / RKU-1).